The primary structure comprises 278 residues: Bifunctional protein FolD (278 aa).

NADP(+) is bound by residues 162 to 164 (GAG) and isoleucine 228.

The protein belongs to the tetrahydrofolate dehydrogenase/cyclohydrolase family. Homodimer.

The catalysed reaction is (6R)-5,10-methylene-5,6,7,8-tetrahydrofolate + NADP(+) = (6R)-5,10-methenyltetrahydrofolate + NADPH. It carries out the reaction (6R)-5,10-methenyltetrahydrofolate + H2O = (6R)-10-formyltetrahydrofolate + H(+). It functions in the pathway one-carbon metabolism; tetrahydrofolate interconversion. Its function is as follows. Catalyzes the oxidation of 5,10-methylenetetrahydrofolate to 5,10-methenyltetrahydrofolate and then the hydrolysis of 5,10-methenyltetrahydrofolate to 10-formyltetrahydrofolate. The sequence is that of Bifunctional protein FolD from Hydrogenobaculum sp. (strain Y04AAS1).